Consider the following 66-residue polypeptide: Ranalexin (66 aa).

The first 20 residues, 1-20 (MFTLKKSLLLLFFLGTINLS), serve as a signal peptide directing secretion. Positions 21-44 (LCEEERNAEEERRDNPDERDVEVE) are cleaved as a propeptide — small acidic peptide. Cys60 and Cys66 are oxidised to a cystine.

This sequence belongs to the frog skin active peptide (FSAP) family. Brevinin subfamily. As to expression, expressed by the skin dorsal glands.

It is found in the secreted. Potent microbicidal activity, active against S.aureus and E.coli. It also acts as a membrane-disruptive agent at higher concentrations. This chain is Ranalexin, found in Aquarana catesbeiana (American bullfrog).